The chain runs to 404 residues: Glycosylated lysosomal membrane protein (404 aa).

Residues 1 to 35 (MRGSVERGWGWGHCASSPLLLWTLLLFAAPFGLLG) form the signal peptide. Residues 36–371 (EKTRQLSLEV…GRLVPTSPGH (336 aa)) are Lumenal-facing. N-linked (GlcNAc...) asparagine glycans are attached at residues N65, N134, N159, N186, and N229. The chain crosses the membrane as a helical span at residues 372–392 (HGSALGAPGLMLLGGGLVLLL). Residues 393-404 (HHRKYSEYQSIN) lie on the Cytoplasmic side of the membrane. The short motif at 400-404 (YQSIN) is the Lysosomal targeting motif element.

It belongs to the GLMP family. As to quaternary structure, interacts (via lumenal domain) with lysosomal protein MFSD1; the interaction starts while both proteins are still in the endoplasmic reticulum and is required for stabilization of MFSD1 in lysosomes but has no direct effect on its targeting to lysosomes or transporter activity. In terms of processing, highly N-glycosylated. N-glycosylation is essential for GLMP stability and for MFSD1 lysosomal localization.

It is found in the lysosome membrane. In terms of biological role, required to protect lysosomal transporter MFSD1 from lysosomal proteolysis and for MFSD1 lysosomal localization. This Pongo abelii (Sumatran orangutan) protein is Glycosylated lysosomal membrane protein.